A 303-amino-acid polypeptide reads, in one-letter code: N-acetyl-D-glucosamine kinase (303 aa).

ATP is bound by residues 4-11 and 133-140; these read GFDIGGTK and GVGGGLVL. Zn(2+) contacts are provided by H157, C177, C179, and C184.

This sequence belongs to the ROK (NagC/XylR) family. NagK subfamily.

The enzyme catalyses N-acetyl-D-glucosamine + ATP = N-acetyl-D-glucosamine 6-phosphate + ADP + H(+). It functions in the pathway cell wall biogenesis; peptidoglycan recycling. Catalyzes the phosphorylation of N-acetyl-D-glucosamine (GlcNAc) derived from cell-wall degradation, yielding GlcNAc-6-P. The sequence is that of N-acetyl-D-glucosamine kinase from Salmonella agona (strain SL483).